The sequence spans 602 residues: ATP-dependent RNA helicase DeaD (602 aa).

The short motif at 6 to 34 (MTFSSFGLNSCIITALNDIGYVQPSPIQA) is the Q motif element. Residues 37 to 208 (IPYLIKGKDV…RRFMKNPKEI (172 aa)) form the Helicase ATP-binding domain. Residue 50–57 (AQTGSGKT) participates in ATP binding. A DEAD box motif is present at residues 156–159 (DEAD). The Helicase C-terminal domain maps to 231-378 (KTDALIRFLE…EVNLPKSDFL (148 aa)).

Belongs to the DEAD box helicase family. DeaD/CsdA subfamily.

The protein localises to the cytoplasm. It carries out the reaction ATP + H2O = ADP + phosphate + H(+). In terms of biological role, DEAD-box RNA helicase involved in various cellular processes at low temperature, including ribosome biogenesis, mRNA degradation and translation initiation. In Buchnera aphidicola subsp. Baizongia pistaciae (strain Bp), this protein is ATP-dependent RNA helicase DeaD.